Here is a 454-residue protein sequence, read N- to C-terminus: Tol-Pal system protein TolB (454 aa).

Positions 1–21 (MSLRPISLMLALLLTSAPALA) are cleaved as a signal peptide.

It belongs to the TolB family. As to quaternary structure, the Tol-Pal system is composed of five core proteins: the inner membrane proteins TolA, TolQ and TolR, the periplasmic protein TolB and the outer membrane protein Pal. They form a network linking the inner and outer membranes and the peptidoglycan layer.

The protein localises to the periplasm. Part of the Tol-Pal system, which plays a role in outer membrane invagination during cell division and is important for maintaining outer membrane integrity. This chain is Tol-Pal system protein TolB, found in Sphingopyxis alaskensis (strain DSM 13593 / LMG 18877 / RB2256) (Sphingomonas alaskensis).